The chain runs to 440 residues: MVPEPGPSANSTPAWGAGPPSAPGGSGWVAAALCVVIALTAAANSLLIALICTQPALRNTSNFFLVSLFTSDLMVGLVVMPPAMLNALYGRWVLARGLCLLWTAFDVMCCSASILNLCLISLDRYLLILSPLRYKLRMTPPRALALVLGAWSLAALASFLPLLLGWHELGHARPPVPGQCRLLASLPFVLVASGLTFFLPSGAICFTYCRILLAARKQAVQVASLTTGMASQASETLQVPRTPRPGVESADSRRLATKHSRKALKASLTLGILLGMFFVTWLPFFVANIVQAVCDCISPGLFDVLTWLGYCNSTMNPIIYPLFMRDFKRALGRFLPCPRCPRERQASLASPSLRTSHSGPRPGLSLQQVLPLPLPPDSDSDSDAGSGGSSGLRLTAQLLLPGEATRDPPLPTRAAAAVNFFNIDPAEPELRPHPLGIPTN.

The Extracellular segment spans residues 1-27 (MVPEPGPSANSTPAWGAGPPSAPGGSG). The helical transmembrane segment at 28–52 (WVAAALCVVIALTAAANSLLIALIC) threads the bilayer. The Cytoplasmic portion of the chain corresponds to 53 to 62 (TQPALRNTSN). A helical membrane pass occupies residues 63–88 (FFLVSLFTSDLMVGLVVMPPAMLNAL). The Extracellular portion of the chain corresponds to 89–96 (YGRWVLAR). Residues 97–122 (GLCLLWTAFDVMCCSASILNLCLISL) traverse the membrane as a helical segment. Cys-99 and Cys-180 are oxidised to a cystine. Residue Asp-106 participates in serotonin binding. Over 123–142 (DRYLLILSPLRYKLRMTPPR) the chain is Cytoplasmic. Residues 143–167 (ALALVLGAWSLAALASFLPLLLGWH) form a helical membrane-spanning segment. The Extracellular segment spans residues 168 to 185 (ELGHARPPVPGQCRLLAS). The helical transmembrane segment at 186-209 (LPFVLVASGLTFFLPSGAICFTYC) threads the bilayer. The Cytoplasmic segment spans residues 210–266 (RILLAARKQAVQVASLTTGMASQASETLQVPRTPRPGVESADSRRLATKHSRKALKA). A helical transmembrane segment spans residues 267–293 (SLTLGILLGMFFVTWLPFFVANIVQAV). Residue Asn-288 participates in serotonin binding. At 294–299 (CDCISP) the chain is on the extracellular side. A helical membrane pass occupies residues 300 to 323 (GLFDVLTWLGYCNSTMNPIIYPLF). Topologically, residues 324–440 (MRDFKRALGR…RPHPLGIPTN (117 aa)) are cytoplasmic. Residues 346–392 (ASLASPSLRTSHSGPRPGLSLQQVLPLPLPPDSDSDSDAGSGGSSGL) form a disordered region. Polar residues predominate over residues 347–358 (SLASPSLRTSHS). Residues 362 to 371 (PGLSLQQVLP) are compositionally biased toward low complexity.

It belongs to the G-protein coupled receptor 1 family. In terms of assembly, interacts with MTOR, RPTOR and NF1. Interacts with CDK5.

Its subcellular location is the cell membrane. Its function is as follows. G-protein coupled receptor for 5-hydroxytryptamine (serotonin), a biogenic hormone that functions as a neurotransmitter, a hormone and a mitogen. Also has a high affinity for tricyclic psychotropic drugs. Ligand binding causes a conformation change that triggers signaling via guanine nucleotide-binding proteins (G proteins) and modulates the activity of downstream effectors. HTR6 is coupled to G(s) G alpha proteins and mediates activation of adenylate cyclase activity. Controls pyramidal neurons migration during corticogenesis, through the regulation of CDK5 activity. Is an activator of mTOR signaling. The sequence is that of 5-hydroxytryptamine receptor 6 (HTR6) from Pan troglodytes (Chimpanzee).